A 404-amino-acid polypeptide reads, in one-letter code: Cysteine--tRNA ligase (404 aa).

A Zn(2+)-binding site is contributed by Cys14. A 'HIGH' region motif is present at residues Pro16–Asn26. Zn(2+) is bound by residues Cys190, His216, and Glu220. Residues Lys248 to Ser252 carry the 'KMSKS' region motif. Lys251 contacts ATP.

Belongs to the class-I aminoacyl-tRNA synthetase family. In terms of assembly, monomer. The cofactor is Zn(2+).

The protein resides in the cytoplasm. The enzyme catalyses tRNA(Cys) + L-cysteine + ATP = L-cysteinyl-tRNA(Cys) + AMP + diphosphate. The polypeptide is Cysteine--tRNA ligase (Mesomycoplasma hyopneumoniae (strain 232) (Mycoplasma hyopneumoniae)).